A 253-amino-acid polypeptide reads, in one-letter code: 3-deoxy-manno-octulosonate cytidylyltransferase (253 aa).

Belongs to the KdsB family.

It localises to the cytoplasm. The enzyme catalyses 3-deoxy-alpha-D-manno-oct-2-ulosonate + CTP = CMP-3-deoxy-beta-D-manno-octulosonate + diphosphate. It participates in nucleotide-sugar biosynthesis; CMP-3-deoxy-D-manno-octulosonate biosynthesis; CMP-3-deoxy-D-manno-octulosonate from 3-deoxy-D-manno-octulosonate and CTP: step 1/1. The protein operates within bacterial outer membrane biogenesis; lipopolysaccharide biosynthesis. Functionally, activates KDO (a required 8-carbon sugar) for incorporation into bacterial lipopolysaccharide in Gram-negative bacteria. The polypeptide is 3-deoxy-manno-octulosonate cytidylyltransferase (Acinetobacter baumannii (strain AYE)).